The following is a 154-amino-acid chain: Photosystem II extrinsic protein U, chloroplastic (154 aa).

The transit peptide at M1–S36 directs the protein to the chloroplast. A thylakoid-targeting transit peptide spans R37–A61.

The protein belongs to the PsbU family. In terms of assembly, PSII is composed of 1 copy each of membrane proteins PsbA, PsbB, PsbC, PsbD, PsbE, PsbF, PsbH, PsbI, PsbJ, PsbK, PsbL, PsbM, PsbT, PsbY, PsbZ, Psb30/Ycf12, at least 3 peripheral proteins of the oxygen-evolving complex and a large number of cofactors. It forms dimeric complexes. The extrinsic subunits in red algae are PsbO (OEC33), PsbQ', cytochrome c-550 and PsbU. In terms of processing, predicted to be translocated into the thylakoid lumen by the Tat system. The position of the first transit peptide cleavage has not been experimentally proven.

The protein resides in the plastid. It is found in the chloroplast thylakoid membrane. Functionally, one of the extrinsic, lumenal subunits of photosystem II (PSII). PSII is a light-driven water plastoquinone oxidoreductase, using light energy to abstract electrons from H(2)O, generating a proton gradient subsequently used for ATP formation. The extrinsic proteins stabilize the structure of photosystem II oxygen-evolving complex (OEC), the ion environment of oxygen evolution and protect the OEC against heat-induced inactivation. This chain is Photosystem II extrinsic protein U, chloroplastic, found in Cyanidium caldarium (Red alga).